We begin with the raw amino-acid sequence, 600 residues long: Netrin-1 (600 aa).

An N-terminal signal peptide occupies residues 1 to 24; the sequence is MMRAMWEALAALAAVSCLVGAVRG. One can recognise a Laminin N-terminal domain in the interval 47–284; it reads HPRRCIPDFV…AVSDLQVGGR (238 aa). 3 N-linked (GlcNAc...) asparagine glycosylation sites follow: Asn95, Asn116, and Asn131. Disulfide bonds link Cys119-Cys152, Cys285-Cys294, Cys287-Cys304, Cys306-Cys315, Cys318-Cys338, Cys341-Cys350, Cys343-Cys368, Cys371-Cys380, Cys383-Cys401, Cys404-Cys416, Cys406-Cys423, Cys425-Cys434, Cys437-Cys451, and Cys472-Cys544. 3 Laminin EGF-like domains span residues 285–340, 341–403, and 404–453; these read CKCN…ECVA, CNCN…ACKA, and CDCH…PCIK. N-linked (GlcNAc...) asparagine glycosylation occurs at Asn417. The region spanning 472–600 is the NTR domain; it reads CDSYCKASKG…KFQQREKKEL (129 aa). The short motif at 530–532 is the Cell attachment site element; that stretch reads RGD.

As to quaternary structure, binds to its receptors; DCC, UNC5A, UNC5B, UNC5C and probably UNC5D. Binds to its receptor; DSCAM. Interacts with APP.

It is found in the secreted. Its subcellular location is the cytoplasm. Functionally, netrins control guidance of CNS commissural axons and peripheral motor axons. Its association with either DCC or some UNC5 receptors will lead to axon attraction or repulsion, respectively. Binding to UNC5C might cause dissociation of UNC5C from polymerized TUBB3 in microtubules and thereby lead to increased microtubule dynamics and axon repulsion. Involved in dorsal root ganglion axon projection towards the spinal cord. It also serves as a survival factor via its association with its receptors which prevent the initiation of apoptosis. Involved in colorectal tumorigenesis by regulating apoptosis. This chain is Netrin-1 (NTN1), found in Sus scrofa (Pig).